Consider the following 57-residue polypeptide: Bowman-Birk type proteinase inhibitor B4 (57 aa).

4 cysteine pairs are disulfide-bonded: Cys6-Cys55, Cys12-Cys17, Cys26-Cys33, and Cys30-Cys47.

This sequence belongs to the Bowman-Birk serine protease inhibitor family. In terms of tissue distribution, expressed in bulb (at protein level).

Serine protease inhibitor. Inhibits trypsin (Ki = 110 nM) and very weakly inhibits chymotrypsin (Ki =1200 nM). Does not inhibit bacterial subtilisin. The protein is Bowman-Birk type proteinase inhibitor B4 of Hyacinthus orientalis (Common hyacinth).